The sequence spans 1029 residues: Tyrosine-protein kinase-like otk (1029 aa).

Positions Met-1–Ala-18 are cleaved as a signal peptide. At Ser-19–Ala-577 the chain is on the extracellular side. Ig-like C2-type domains are found at residues Ser-21–Ser-110, Leu-109–Ser-195, Pro-247–Ser-361, Pro-364–Asn-459, and Pro-464–Val-554. An N-linked (GlcNAc...) asparagine glycan is attached at Asn-35. Cystine bridges form between Cys-42–Cys-91, Cys-133–Cys-184, Cys-272–Cys-350, and Cys-395–Cys-443. N-linked (GlcNAc...) asparagine glycans are attached at residues Asn-332, Asn-413, Asn-425, Asn-440, Asn-453, Asn-508, and Asn-520. A disulfide bridge links Cys-486 with Cys-538. A helical membrane pass occupies residues Val-578 to Trp-598. Residues Cys-599–Lys-1029 lie on the Cytoplasmic side of the membrane. 2 disordered regions span residues Leu-613–Ala-675 and Ser-714–Met-756. Over residues Lys-651 to Arg-669 the composition is skewed to polar residues. Ser-674 bears the Phosphoserine mark. The Protein kinase; inactive domain occupies Leu-688–Met-1024. Positions Ser-716–Ser-727 are enriched in basic and acidic residues.

It belongs to the protein kinase superfamily. Tyr protein kinase family. Insulin receptor subfamily. As to quaternary structure, interacts with plexA; component of a receptor complex that mediates the repulsive signaling in response to Semaphorin ligands.

The protein localises to the cell membrane. Functionally, acts as a calcium-dependent, homophilic cell adhesion molecule that regulates neural recognition during the development of the nervous system. Component of the repulsive Plexin signaling response to regulate motor axon guidance at the embryonic stage. Also component of a receptor complex that is required in the adult visual system to innervate the lamina layer; specific targeting of R1-R6 axons. The protein is Tyrosine-protein kinase-like otk of Drosophila simulans (Fruit fly).